The chain runs to 189 residues: Photosystem I assembly protein Ycf4 (189 aa).

Helical transmembrane passes span 31-51 (TVIL…YFGF) and 70-90 (VMSF…LTII).

The protein belongs to the Ycf4 family.

It localises to the plastid. The protein resides in the chloroplast thylakoid membrane. Functionally, seems to be required for the assembly of the photosystem I complex. This Chlorokybus atmophyticus (Soil alga) protein is Photosystem I assembly protein Ycf4.